The sequence spans 152 residues: 3-dehydroquinate dehydratase (152 aa).

The Proton acceptor role is filled by Tyr-22. Positions 73, 79, and 86 each coordinate substrate. The active-site Proton donor is His-99. Substrate contacts are provided by residues 100–101 and Arg-110; that span reads LS.

The protein belongs to the type-II 3-dehydroquinase family. Homododecamer.

It carries out the reaction 3-dehydroquinate = 3-dehydroshikimate + H2O. The protein operates within metabolic intermediate biosynthesis; chorismate biosynthesis; chorismate from D-erythrose 4-phosphate and phosphoenolpyruvate: step 3/7. Catalyzes a trans-dehydration via an enolate intermediate. This chain is 3-dehydroquinate dehydratase, found in Gemmatimonas aurantiaca (strain DSM 14586 / JCM 11422 / NBRC 100505 / T-27).